A 217-amino-acid polypeptide reads, in one-letter code: Large ribosomal subunit protein uL1 (217 aa).

This sequence belongs to the universal ribosomal protein uL1 family.

The chain is Large ribosomal subunit protein uL1 (RpL10Ab) from Drosophila melanogaster (Fruit fly).